The sequence spans 940 residues: Protein translocase subunit SecA (940 aa).

ATP-binding positions include Gln85, Gly103–Thr107, and Asp505. The interval Pro851–Lys940 is disordered. The span at Gly855 to Gly865 shows a compositional bias: basic and acidic residues. Positions Arg928–Lys940 are enriched in basic residues.

Belongs to the SecA family. As to quaternary structure, monomer and homodimer. Part of the essential Sec protein translocation apparatus which comprises SecA, SecYEG and auxiliary proteins SecDF. Other proteins may also be involved.

The protein resides in the cell membrane. It localises to the cytoplasm. The catalysed reaction is ATP + H2O + cellular proteinSide 1 = ADP + phosphate + cellular proteinSide 2.. In terms of biological role, part of the Sec protein translocase complex. Interacts with the SecYEG preprotein conducting channel. Has a central role in coupling the hydrolysis of ATP to the transfer of proteins into and across the cell membrane, serving as an ATP-driven molecular motor driving the stepwise translocation of polypeptide chains across the membrane. The protein is Protein translocase subunit SecA of Streptomyces griseus.